Consider the following 299-residue polypeptide: Prohibitin-2 (299 aa).

The residue at position 2 (Ala2) is an N-acetylalanine. Positions 19 to 49 (MGTALKLLLGAGAVAYGVRESVFTVEGGHRA) are necessary for transcriptional repression. Position 128 is a phosphotyrosine (Tyr128). Lys147 bears the N6-acetyllysine mark. The segment at 150-174 (ASQLITQRAQVSLLIRRELTERAKD) is necessary for transcriptional repression. Ser151 bears the Phosphoserine mark. Residues 190 to 238 (SREYTAAVEAKQVAQQEAQRAQFLVEKAKQEQRQKIVQAEGEAEAAKML) adopt a coiled-coil conformation. Lys200, Lys236, Lys250, and Lys262 each carry N6-acetyllysine.

It belongs to the prohibitin family. In terms of assembly, the mitochondrial prohibitin complex consists of two subunits (PHB1 and PHB2), assembled into a membrane-associated ring-shaped supercomplex of approximately 1 mDa. Interacts with ESR1, HDAC1 and HDAC5. Interacts with ZNF703. Interacts with STOML2. Interacts with ARFGEF3. Interacts with SPHK2. Interacts with COX4I1; the interaction associates PHB2 with COX. Interacts with MAP1LC3B (membrane-bound form LC3-II); the interaction is direct and upon mitochondrial depolarization and proteasome-dependent outer membrane rupture. Interacts with IGFBP6 (via C-terminal domain). Interacts with CLPB. Interacts with CD86 (via cytoplasmic domain); the interactions increases after priming with CD40. Interacts with AFG3L2. Interacts with DNAJC19. Interacts with AKT2; this interaction may be important for myogenic differentiation. Phosphorylated. Tyrosine phosphorylation is indirectly stimulated by IGFBP6.

The protein localises to the mitochondrion inner membrane. The protein resides in the cytoplasm. Its subcellular location is the nucleus. It localises to the cell membrane. Its function is as follows. Protein with pleiotropic attributes mediated in a cell-compartment- and tissue-specific manner, which include the plasma membrane-associated cell signaling functions, mitochondrial chaperone, and transcriptional co-regulator of transcription factors and sex steroid hormones in the nucleus. In the mitochondria, together with PHB, forms large ring complexes (prohibitin complexes) in the inner mitochondrial membrane (IMM) and functions as a chaperone protein that stabilizes mitochondrial respiratory enzymes and maintains mitochondrial integrity in the IMM, which is required for mitochondrial morphogenesis, neuronal survival, and normal lifespan. The prohibitin complex, with DNAJC19, regulates cardiolipin remodeling and the protein turnover of OMA1 in a cardiolipin-binding manner. Also regulates cytochrome-c oxidase assembly (COX) and mitochondrial respiration. Binding to sphingoid 1-phosphate (SPP) modulates its regulator activity. Has a key role of mitophagy receptor involved in targeting mitochondria for autophagic degradation. Involved in mitochondrial-mediated antiviral innate immunity, activates RIG-I-mediated signal transduction and production of IFNB1 and pro-inflammatory cytokine IL6. In terms of biological role, in the nucleus, serves as transcriptional co-regulator. Acts as a mediator of transcriptional repression by nuclear hormone receptors via recruitment of histone deacetylases. Functions as an estrogen receptor (ER)-selective coregulator that potentiates the inhibitory activities of antiestrogens and represses the activity of estrogens. Competes with NCOA1 for modulation of ER transcriptional activity. Functionally, in the plasma membrane, is involved in IGFBP6-induced cell migration. Cooperates with CD86 to mediate CD86-signaling in B lymphocytes that regulates the level of IgG1 produced through the activation of distal signaling intermediates. Upon CD40 engagement, required to activate NF-kappa-B signaling pathway via phospholipase C and protein kinase C activation. The polypeptide is Prohibitin-2 (Rattus norvegicus (Rat)).